We begin with the raw amino-acid sequence, 84 residues long: Small ribosomal subunit protein uS17 (84 aa).

This sequence belongs to the universal ribosomal protein uS17 family. As to quaternary structure, part of the 30S ribosomal subunit.

One of the primary rRNA binding proteins, it binds specifically to the 5'-end of 16S ribosomal RNA. The chain is Small ribosomal subunit protein uS17 from Shigella boydii serotype 18 (strain CDC 3083-94 / BS512).